We begin with the raw amino-acid sequence, 405 residues long: Acetylornithine/succinyldiaminopimelate aminotransferase (405 aa).

Residues 107–108 and Phe-140 each bind pyridoxal 5'-phosphate; that span reads GA. Residue Arg-143 coordinates N(2)-acetyl-L-ornithine. 225-228 lines the pyridoxal 5'-phosphate pocket; it reads DEVQ. Lys-254 bears the N6-(pyridoxal phosphate)lysine mark. Thr-282 lines the N(2)-acetyl-L-ornithine pocket. A pyridoxal 5'-phosphate-binding site is contributed by Thr-283.

Belongs to the class-III pyridoxal-phosphate-dependent aminotransferase family. ArgD subfamily. In terms of assembly, homodimer. Pyridoxal 5'-phosphate is required as a cofactor.

The protein localises to the cytoplasm. The enzyme catalyses N(2)-acetyl-L-ornithine + 2-oxoglutarate = N-acetyl-L-glutamate 5-semialdehyde + L-glutamate. It carries out the reaction N-succinyl-(2S,6S)-2,6-diaminopimelate + 2-oxoglutarate = (S)-2-succinylamino-6-oxoheptanedioate + L-glutamate. It functions in the pathway amino-acid biosynthesis; L-arginine biosynthesis; N(2)-acetyl-L-ornithine from L-glutamate: step 4/4. The protein operates within amino-acid biosynthesis; L-lysine biosynthesis via DAP pathway; LL-2,6-diaminopimelate from (S)-tetrahydrodipicolinate (succinylase route): step 2/3. Involved in both the arginine and lysine biosynthetic pathways. In Yersinia pestis, this protein is Acetylornithine/succinyldiaminopimelate aminotransferase.